A 373-amino-acid chain; its full sequence is Mannitol-1-phosphate 5-dehydrogenase (373 aa).

An NAD(+)-binding site is contributed by Ala3–Gly14.

Belongs to the mannitol dehydrogenase family.

The catalysed reaction is D-mannitol 1-phosphate + NAD(+) = beta-D-fructose 6-phosphate + NADH + H(+). The polypeptide is Mannitol-1-phosphate 5-dehydrogenase (mtlD) (Bacillus subtilis (strain 168)).